The primary structure comprises 125 residues: Small ribosomal subunit protein eS8 (125 aa).

The interval 1-20 (MLWQGESIRKVTGGRRRPAQ) is disordered.

The protein belongs to the eukaryotic ribosomal protein eS8 family. Part of the 30S ribosomal subunit.

The sequence is that of Small ribosomal subunit protein eS8 from Methanoregula boonei (strain DSM 21154 / JCM 14090 / 6A8).